We begin with the raw amino-acid sequence, 785 residues long: Cullin-3 (785 aa).

The Cullin neddylation domain maps to 715–777 (SRKHQADACI…REYLQRQADN (63 aa)). Residue K729 forms a Glycyl lysine isopeptide (Lys-Gly) (interchain with G-Cter in NEDD8) linkage.

This sequence belongs to the cullin family. Probable component of multiple cullin-RING-based BC3B (BTB-CUL3-BTB) E3 ubiquitin-protein ligase complexes formed by cul-3, rbx-1 and a variable BTB domain-containing protein as adapter and substrate recognition component. Interacts with btb1, btb2, btb3, nedd8 and pip1. Post-translationally, neddylated; enhancing the ubiquitin-ligase activity.

Its subcellular location is the cytoplasm. It functions in the pathway protein modification; protein ubiquitination. Probable core component of multiple cullin-RING-based BC3B (BTB-CUL3-BTB) E3 ubiquitin-protein ligase complexes which mediate the ubiquitination and subsequent proteasomal degradation of target proteins. As a scaffold protein may contribute to catalysis through positioning of the substrate and the ubiquitin-conjugating enzyme. The functional specificity of the BC3B complex depends on the substrate recognition component. Involved in ubiquitin-mediated degradation of btb3. The polypeptide is Cullin-3 (cul3) (Schizosaccharomyces pombe (strain 972 / ATCC 24843) (Fission yeast)).